A 317-amino-acid chain; its full sequence is Neuroguidin-A (317 aa).

Disordered regions lie at residues 125–170 (ENDP…SKVK) and 280–317 (SALT…RRRH). The segment covering 146 to 157 (DERESDSGEEGA) has biased composition (acidic residues). The span at 297-317 (KKSKKGPKKSKKKKGFSRRRH) shows a compositional bias: basic residues.

The protein belongs to the SAS10 family. In terms of assembly, part of the small subunit (SSU) processome, composed of more than 70 proteins and the RNA chaperone small nucleolar RNA (snoRNA) U3.

It is found in the nucleus. It localises to the nucleolus. The protein localises to the chromosome. The protein resides in the centromere. Its subcellular location is the cytoplasm. It is found in the cell projection. It localises to the axon. The protein localises to the dendrite. The protein resides in the filopodium. Part of the small subunit (SSU) processome, first precursor of the small eukaryotic ribosomal subunit. During the assembly of the SSU processome in the nucleolus, many ribosome biogenesis factors, an RNA chaperone and ribosomal proteins associate with the nascent pre-rRNA and work in concert to generate RNA folding, modifications, rearrangements and cleavage as well as targeted degradation of pre-ribosomal RNA by the RNA exosome. Its dissociation from the complex determines the transition from state pre-A1 to state pre-A1*. May inhibit mRNA translation. The chain is Neuroguidin-A (ngdn-a) from Xenopus laevis (African clawed frog).